The chain runs to 263 residues: Tryptophan synthase alpha chain (263 aa).

Residues glutamate 49 and aspartate 60 each act as proton acceptor in the active site.

Belongs to the TrpA family. In terms of assembly, tetramer of two alpha and two beta chains.

It carries out the reaction (1S,2R)-1-C-(indol-3-yl)glycerol 3-phosphate + L-serine = D-glyceraldehyde 3-phosphate + L-tryptophan + H2O. It functions in the pathway amino-acid biosynthesis; L-tryptophan biosynthesis; L-tryptophan from chorismate: step 5/5. Its function is as follows. The alpha subunit is responsible for the aldol cleavage of indoleglycerol phosphate to indole and glyceraldehyde 3-phosphate. This Cereibacter sphaeroides (strain ATCC 17025 / ATH 2.4.3) (Rhodobacter sphaeroides) protein is Tryptophan synthase alpha chain.